The chain runs to 266 residues: ATG8-interacting protein 2 (266 aa).

An AIM (Atg8-family-interacting motif) motif is present at residues 14-17; it reads WEVV. The helical transmembrane segment at 191–210 threads the bilayer; it reads TNTVWSICIAAAVMGIVILG. The short motif at 218–221 is the AIM (Atg8-family-interacting motif) element; it reads WQIL.

Interacts with ATG8F.

The protein localises to the endoplasmic reticulum membrane. The protein resides in the membrane. May be involved in salt stress-induced vesicle-to-vacuole trafficking pathway. Through its interaction with ATG8F, may enable delivery of the vesicle bodies to the vacuole by an autophagic pathway. Plays a role in seed germination in response to exogenous abscisic acid (ABA) treatment. The polypeptide is ATG8-interacting protein 2 (Arabidopsis thaliana (Mouse-ear cress)).